Here is a 113-residue protein sequence, read N- to C-terminus: MEKPNYQLYRNTTLGQALQKTLDDFVGDQMIPDSLSKKIMDSFDKSINKILPHKAKNKVNFRADKLRAYRYCDNVWTFIVEQIDLRDAVEGGTVDRLKIVACDGQTKGQIGHA.

This sequence belongs to the TFIIA subunit 2 family. TFIIA is a heterodimer of the large unprocessed subunit 1 and a small subunit gamma. It was originally believed to be a heterotrimer of an alpha, a beta and a gamma subunit.

It is found in the nucleus. Functionally, TFIIA is a component of the transcription machinery of RNA polymerase II and plays an important role in transcriptional activation. TFIIA in a complex with TBP mediates transcriptional activity. This chain is Transcription initiation factor IIA subunit 2, found in Caenorhabditis elegans.